The following is a 107-amino-acid chain: Multidrug resistance protein mmr (107 aa).

4 helical membrane passes run 2-19, 29-51, 58-77, and 82-104; these read AYLF…ATTL, LVPT…LSIS, VAYA…IAVL, and PVSV…LNLA.

The protein belongs to the drug/metabolite transporter (DMT) superfamily. Small multidrug resistance (SMR) (TC 2.A.7.1) family. Mmr subfamily.

Its subcellular location is the cell membrane. Its function is as follows. Multidrug efflux pump. Confers resistance to tetraphenylphosphonium (TPP), erythromycin, ethidium bromide, acriflavine, safranin O and pyronin Y. This chain is Multidrug resistance protein mmr (mmr), found in Mycobacterium leprae (strain TN).